The primary structure comprises 392 residues: Large ribosomal subunit protein uL3 (392 aa).

This sequence belongs to the universal ribosomal protein uL3 family. As to quaternary structure, component of the large ribosomal subunit (LSU). Mature N.crassa ribosomes consist of a small (40S) and a large (60S) subunit. The 40S small subunit contains 1 molecule of ribosomal RNA (18S rRNA) and at least 32 different proteins. The large 60S subunit contains 3 rRNA molecules (26S, 5.8S and 5S rRNA) and at least 42 different proteins.

It localises to the cytoplasm. Component of the ribosome, a large ribonucleoprotein complex responsible for the synthesis of proteins in the cell. The small ribosomal subunit (SSU) binds messenger RNAs (mRNAs) and translates the encoded message by selecting cognate aminoacyl-transfer RNA (tRNA) molecules. The large subunit (LSU) contains the ribosomal catalytic site termed the peptidyl transferase center (PTC), which catalyzes the formation of peptide bonds, thereby polymerizing the amino acids delivered by tRNAs into a polypeptide chain. The nascent polypeptides leave the ribosome through a tunnel in the LSU and interact with protein factors that function in enzymatic processing, targeting, and the membrane insertion of nascent chains at the exit of the ribosomal tunnel. The sequence is that of Large ribosomal subunit protein uL3 (rpl-3) from Neurospora crassa (strain ATCC 24698 / 74-OR23-1A / CBS 708.71 / DSM 1257 / FGSC 987).